The sequence spans 98 residues: NADH-ubiquinone oxidoreductase chain 4L (98 aa).

Transmembrane regions (helical) follow at residues 2 to 22 (QMTMINMILAFIMATTGLLMF), 26 to 46 (FMSSLLCLEGMMLSIFILMSI), and 59 to 79 (FPLVLLVFAACEAAIGLSLLV).

The protein belongs to the complex I subunit 4L family. Core subunit of respiratory chain NADH dehydrogenase (Complex I) which is composed of 45 different subunits.

The protein resides in the mitochondrion inner membrane. It carries out the reaction a ubiquinone + NADH + 5 H(+)(in) = a ubiquinol + NAD(+) + 4 H(+)(out). Its function is as follows. Core subunit of the mitochondrial membrane respiratory chain NADH dehydrogenase (Complex I) which catalyzes electron transfer from NADH through the respiratory chain, using ubiquinone as an electron acceptor. Part of the enzyme membrane arm which is embedded in the lipid bilayer and involved in proton translocation. The chain is NADH-ubiquinone oxidoreductase chain 4L (MT-ND4L) from Echinosorex gymnura (Moon rat).